The chain runs to 132 residues: uncharacterized protein (132 aa).

3 helical membrane passes run 28 to 48 (LLRLISLCIPIIRPFSFLIYP), 59 to 79 (ILPSILPIIPFAISSSLLFSY), and 106 to 126 (LLVASFVYLPYRSPLPVVIEI).

The protein resides in the membrane. This is an uncharacterized protein from Schizosaccharomyces pombe (strain 972 / ATCC 24843) (Fission yeast).